The following is a 325-amino-acid chain: MNALIAVQNNAVDSGQDYSGFTLIPSAQSPRLLELTFTEQTTKQFLEQVAEWPVQALEYKSFLRFRVGKILDDLCANQLQPLLLKPLLNRAEGALLINAVGIDDVAQADEMVKLATAVAHLIGRSNFDAMSGQYYARFVVKNVDNSDSYLRQPHRVMELHNDGTYVEEITDYVLMMKIDEQNMQGGNSLLLHLDDWEHLDHYFRHPLARRPMRFAAPPSKNVSKDVFHPVFDVDQQGRPVMRYIDQFVQPKDFEEGVWLSELSDAIETSKGILSVPVPVGKFLLINNLFWLHGRDRFTPHPDLRRELMRQRGYFAYATHHYQTHQ.

H160, D162, and H292 together coordinate Fe cation.

The protein belongs to the glutarate hydroxylase family. As to quaternary structure, homotetramer. Requires Fe(2+) as cofactor.

The enzyme catalyses glutarate + 2-oxoglutarate + O2 = (S)-2-hydroxyglutarate + succinate + CO2. The protein operates within amino-acid degradation. Its function is as follows. Acts as an alpha-ketoglutarate-dependent dioxygenase catalyzing hydroxylation of glutarate (GA) to L-2-hydroxyglutarate (L2HG). Functions in a L-lysine degradation pathway that proceeds via cadaverine, glutarate and L-2-hydroxyglutarate. The polypeptide is Glutarate 2-hydroxylase (Shigella boydii serotype 18 (strain CDC 3083-94 / BS512)).